The following is a 273-amino-acid chain: Pantothenate synthetase (273 aa).

ATP is bound at residue 27–34 (MGALHQGH). The active-site Proton donor is the H34. Q58 serves as a coordination point for (R)-pantoate. Position 58 (Q58) interacts with beta-alanine. 144 to 147 (GKKD) provides a ligand contact to ATP. Q150 contacts (R)-pantoate. Residues V173 and 181 to 184 (LSSR) contribute to the ATP site.

Belongs to the pantothenate synthetase family. Homodimer.

Its subcellular location is the cytoplasm. It catalyses the reaction (R)-pantoate + beta-alanine + ATP = (R)-pantothenate + AMP + diphosphate + H(+). It functions in the pathway cofactor biosynthesis; (R)-pantothenate biosynthesis; (R)-pantothenate from (R)-pantoate and beta-alanine: step 1/1. Its function is as follows. Catalyzes the condensation of pantoate with beta-alanine in an ATP-dependent reaction via a pantoyl-adenylate intermediate. The polypeptide is Pantothenate synthetase (Nitratiruptor sp. (strain SB155-2)).